The chain runs to 130 residues: Small ribosomal subunit protein bS6 (130 aa).

The interval 100–130 (SPMVKAKDERRERHDFASEANDDSEAGDSEE) is disordered. A compositionally biased stretch (basic and acidic residues) spans 104-116 (KAKDERRERHDFA). The span at 119–130 (ANDDSEAGDSEE) shows a compositional bias: acidic residues.

The protein belongs to the bacterial ribosomal protein bS6 family.

Its function is as follows. Binds together with bS18 to 16S ribosomal RNA. The polypeptide is Small ribosomal subunit protein bS6 (Yersinia pestis (strain Pestoides F)).